Consider the following 776-residue polypeptide: General transcription and DNA repair factor IIH helicase subunit XPD (776 aa).

The region spanning 7–277 (DLLVYFPYSY…KKVDEKRLKD (271 aa)) is the Helicase ATP-binding domain. Residue 42-49 (MPSGTGKT) participates in ATP binding. The [4Fe-4S] cluster site is built by C115, C133, C150, and C184. A DEAH box motif is present at residues 228-231 (DEAH). Residues 736–776 (HVEKQSTSKPPQQQNSAINSTITTSTTTTTTTSTISETHLT) are disordered. The segment covering 742 to 754 (TSKPPQQQNSAIN) has biased composition (polar residues). Positions 755-776 (STITTSTTTTTTTSTISETHLT) are enriched in low complexity.

This sequence belongs to the helicase family. RAD3/XPD subfamily. As to quaternary structure, component of the 7-subunit TFIIH core complex composed of XPB/repB, XPD/repD, gtf2h1, gtf2h2, gtf2h3, gtf2h4 and gtf2h5, which is active in NER. The core complex associates with the 3-subunit CDK-activating kinase (CAK) module composed of cycH/cyclin H, cdk7 and mnat1 to form the 10-subunit holoenzyme (holo-TFIIH) active in transcription. Requires Mg(2+) as cofactor. It depends on [4Fe-4S] cluster as a cofactor.

The protein resides in the nucleus. The catalysed reaction is Couples ATP hydrolysis with the unwinding of duplex DNA at the replication fork by translocating in the 5'-3' direction. This creates two antiparallel DNA single strands (ssDNA). The leading ssDNA polymer is the template for DNA polymerase III holoenzyme which synthesizes a continuous strand.. It catalyses the reaction ATP + H2O = ADP + phosphate + H(+). Functionally, ATP-dependent 5'-3' DNA helicase, component of the general transcription and DNA repair factor IIH (TFIIH) core complex, which is involved in general and transcription-coupled nucleotide excision repair (NER) of damaged DNA and, when complexed to CDK-activating kinase (CAK), in transcription by RNA polymerase II. In NER, TFIIH acts by opening DNA around the lesion to allow the excision of the damaged oligonucleotide and its replacement by a new DNA fragment. The ATP-dependent helicase activity of XPD/repD is required for DNA opening. In transcription, TFIIH has an essential role in transcription initiation. When the pre-initiation complex (PIC) has been established, TFIIH is required for promoter opening and promoter escape. Phosphorylation of the C-terminal tail (CTD) of the largest subunit of RNA polymerase II by the kinase module CAK controls the initiation of transcription. XPD/repD acts by forming a bridge between CAK and the core-TFIIH complex. In Dictyostelium discoideum (Social amoeba), this protein is General transcription and DNA repair factor IIH helicase subunit XPD.